Consider the following 353-residue polypeptide: Rhodopsin (353 aa).

At 1-36 the chain is on the extracellular side; the sequence is MNGTEGPYFYIPMLNTTGIVRSPYEYPQYYLVNPAA. Residues Asn2 and Asn15 are each glycosylated (N-linked (GlcNAc...) asparagine). A helical transmembrane segment spans residues 37–61; the sequence is YAALCAYMFLLILLGFPINFLTLYV. Topologically, residues 62–73 are cytoplasmic; sequence TIEHKKLRTPLN. A helical membrane pass occupies residues 74–96; sequence YILLNLAVANLFMVFGGFTTTMY. The Extracellular portion of the chain corresponds to 97–110; it reads TSMHGYFVLGRLGC. A disulfide bond links Cys110 and Cys187. A helical membrane pass occupies residues 111 to 133; sequence NLEGFFATLGGEIGLWSLVVLAV. A 'Ionic lock' involved in activated form stabilization motif is present at residues 134–136; sequence ERW. Residues 134 to 152 are Cytoplasmic-facing; the sequence is ERWMVVCKPISNFRFTENH. A helical transmembrane segment spans residues 153–173; the sequence is AIMGLGFTWFAASACAVPPLV. The Extracellular segment spans residues 174–202; the sequence is GWSRYIPEGMQCSCGVDYYTRAEGFNNES. N-linked (GlcNAc...) asparagine glycosylation occurs at Asn200. A helical membrane pass occupies residues 203 to 224; that stretch reads FVVYMFVCHFLIPLIVVFFCYG. Over 225–252 the chain is Cytoplasmic; sequence RLLCAVKEAAAAQQESETTQRAEREVTR. A helical transmembrane segment spans residues 253–274; that stretch reads MVVIMVIAFLICWCPYAGVAWY. Residues 275-286 lie on the Extracellular side of the membrane; the sequence is IFSNQGSEFGPL. A helical transmembrane segment spans residues 287-308; that stretch reads FMTIPAFFAKSSSIYNPLIYIF. Lys296 carries the post-translational modification N6-(retinylidene)lysine. Topologically, residues 309–353 are cytoplasmic; sequence MNKQFRHCMITTLCCGKNPFEEEEGSTTTSKTEASSASSSSVSPA. Residues Cys322 and Cys323 are each lipidated (S-palmitoyl cysteine). Residues 329-353 form a disordered region; the sequence is EEEEGSTTTSKTEASSASSSSVSPA. Positions 334-353 are enriched in low complexity; it reads STTTSKTEASSASSSSVSPA.

This sequence belongs to the G-protein coupled receptor 1 family. Opsin subfamily. Post-translationally, phosphorylated on some or all of the serine and threonine residues present in the C-terminal region. Contains one covalently linked retinal chromophore.

Its subcellular location is the membrane. It is found in the cell projection. The protein resides in the cilium. It localises to the photoreceptor outer segment. In terms of biological role, photoreceptor required for image-forming vision at low light intensity. While most salt water fish species use retinal as chromophore, most freshwater fish use 3-dehydroretinal, or a mixture of retinal and 3-dehydroretinal. Light-induced isomerization of 11-cis to all-trans retinal triggers a conformational change that activates signaling via G-proteins. Subsequent receptor phosphorylation mediates displacement of the bound G-protein alpha subunit by arrestin and terminates signaling. The protein is Rhodopsin (rho) of Solea solea (Common sole).